The sequence spans 420 residues: Serine hydroxymethyltransferase (420 aa).

(6S)-5,6,7,8-tetrahydrofolate is bound by residues leucine 121 and 125-127; that span reads GHL. The residue at position 230 (lysine 230) is an N6-(pyridoxal phosphate)lysine. (6S)-5,6,7,8-tetrahydrofolate is bound by residues glutamate 246 and 354–356; that span reads SPF.

It belongs to the SHMT family. Homodimer. Pyridoxal 5'-phosphate is required as a cofactor.

The protein localises to the cytoplasm. It carries out the reaction (6R)-5,10-methylene-5,6,7,8-tetrahydrofolate + glycine + H2O = (6S)-5,6,7,8-tetrahydrofolate + L-serine. It participates in one-carbon metabolism; tetrahydrofolate interconversion. Its pathway is amino-acid biosynthesis; glycine biosynthesis; glycine from L-serine: step 1/1. Functionally, catalyzes the reversible interconversion of serine and glycine with tetrahydrofolate (THF) serving as the one-carbon carrier. This reaction serves as the major source of one-carbon groups required for the biosynthesis of purines, thymidylate, methionine, and other important biomolecules. Also exhibits THF-independent aldolase activity toward beta-hydroxyamino acids, producing glycine and aldehydes, via a retro-aldol mechanism. This chain is Serine hydroxymethyltransferase, found in Rickettsia akari (strain Hartford).